We begin with the raw amino-acid sequence, 840 residues long: 9-beta-pimara-7,15-diene synthase, chloroplastic (840 aa).

Residues Met-1 to Ala-56 constitute a chloroplast transit peptide. Residues Asp-589, Asp-593, Asn-733, Ser-737, and Glu-741 each coordinate Mg(2+). Residues Asp-589–Asp-593 carry the DDXXD motif motif.

It belongs to the terpene synthase family. The cofactor is Mg(2+).

The protein localises to the plastid. Its subcellular location is the chloroplast. It carries out the reaction 9alpha-copalyl diphosphate = 9beta-pimara-7,15-diene + diphosphate. Involved in the biosynthesis of momilactone A and B phytoalexins. Catalyzes the conversion of syn-copalyl diphosphate to the phytoalexin precursor syn-pimara-7,15-diene. The sequence is that of 9-beta-pimara-7,15-diene synthase, chloroplastic from Oryza sativa subsp. indica (Rice).